The sequence spans 79 residues: Large ribosomal subunit protein uL30 (79 aa).

This sequence belongs to the universal ribosomal protein uL30 family. In terms of assembly, part of the 50S ribosomal subunit.

The protein is Large ribosomal subunit protein uL30 of Anaeromyxobacter sp. (strain Fw109-5).